Here is a 357-residue protein sequence, read N- to C-terminus: MDASVKTLNTEKAKALQAALAQIEKQFGKGTIMRLGEGEVIDDIEVVSTGSLGLDIALGVGGLPRGRVIEIYGPESSGKTTLTLQVIAEMQKLAGTCAFIDAEHALDSQYAQKLGVNLQELLISQPDTGEQALEIVDALVRSGSVDLIVVDSVAALTPKAELEGEMGDSLPGLQARLMSQALRKLTATIKKSNCMVIFINQIRMKIGVMFGSPETTTGGNALKFYASVRLDIRRIGSIKRGEEVIGNETKVKVVKNKVSPPFKTAEFDILFGEGVSREGEIIDLGVIAKVIDKSGAWYAYNGEKIGQGKDNSREFLRENPELAHEIENKIRESLGVALLPSIEIEVPKGTKQAAAGA.

73-80 (GPESSGKT) serves as a coordination point for ATP.

The protein belongs to the RecA family.

It is found in the cytoplasm. Its function is as follows. Can catalyze the hydrolysis of ATP in the presence of single-stranded DNA, the ATP-dependent uptake of single-stranded DNA by duplex DNA, and the ATP-dependent hybridization of homologous single-stranded DNAs. It interacts with LexA causing its activation and leading to its autocatalytic cleavage. The polypeptide is Protein RecA (Methylibium petroleiphilum (strain ATCC BAA-1232 / LMG 22953 / PM1)).